We begin with the raw amino-acid sequence, 921 residues long: MEYKDTLLMPKTDFPMRGNLPNKEPEWQAKWEEEKLYEKIQEKNTGRKAYILHDGPPYANGELHMGHALNKTIKDIIVRYKSMAGFSSPYVPGWDTHGLPIETAIAKKGVKRKEMSIAEFRKLCAEYAMTQVDGQRTGFKRLGINGDWENPYITLLPEYEAEQIKVFGEMAKKGYIYKGKKPVYWSPSSESALAEAEIEYQDKKSASIFVAFKVTDGKGVLDEGTNIVIWTTTPWTIPANMGITVNPDLDYVVIESAGEKYVVAEALLPNLREKLGFEDATVVKTVRGSELDRIVTKHPFYDRDSLVMNGEHATAEAGTGAVHTAPGHGEDDFLIGKKYDLEILAPLDDRGVFTDEAPGFEGVFYDTANKMVTEKLEEVGALLKMEFITHSYPHDWRTKKPVIFRATAQWFASIDAFRDDLLKAVKGVNWTPAWGETRLFNMVRDRGDWVISRQRAWGVPLPIFYAENGEAIITDETINHISELFREHGSNVWFERDVKDLLPDGFTHPGSPNGEFTKETDIMDVWFDSGSSHQAVLNARPELTRPADLYMEGSDQYRGWFNSSLTTAVAITGEAPYRNVLSHGFALDGEGRKMSKSLGNTLLPGKVIKQLGADIVRLWVASVDYQADVRVSDEILKQVSEVYRKIRNTMRFLLGNINDFNPTTNTVSYENLREVDKYMLIKLNDLVKNVKDSYEAFEFSTIYHQINNFCTVELSQFYMDFAKDVVYIEAADSNDRRAMQTVFYEAAVTLTKLLAPILPHTTEEVWNSLIGEGAESIHLQDLPDVKVLADSEEITAKWDAFMQIRDNVQKALEFARNEKLIGKSMLAKVTLYVDGEAKTLFDSLEGDFAQLFIVSDFELVEGLENAPESAFKSNQVAVQITVAEGETCERCRVVKKDVGVDPKHPTLCGRCADIVVKHYEA.

The short motif at 57–67 (PYANGELHMGH) is the 'HIGH' region element. Glutamate 552 contacts L-isoleucyl-5'-AMP. Residues 593–597 (KMSKS) carry the 'KMSKS' region motif. Lysine 596 is a binding site for ATP. Residues cysteine 888, cysteine 891, cysteine 908, and cysteine 911 each coordinate Zn(2+).

The protein belongs to the class-I aminoacyl-tRNA synthetase family. IleS type 1 subfamily. Monomer. Requires Zn(2+) as cofactor.

The protein localises to the cytoplasm. It catalyses the reaction tRNA(Ile) + L-isoleucine + ATP = L-isoleucyl-tRNA(Ile) + AMP + diphosphate. Its function is as follows. Catalyzes the attachment of isoleucine to tRNA(Ile). As IleRS can inadvertently accommodate and process structurally similar amino acids such as valine, to avoid such errors it has two additional distinct tRNA(Ile)-dependent editing activities. One activity is designated as 'pretransfer' editing and involves the hydrolysis of activated Val-AMP. The other activity is designated 'posttransfer' editing and involves deacylation of mischarged Val-tRNA(Ile). In Listeria welshimeri serovar 6b (strain ATCC 35897 / DSM 20650 / CCUG 15529 / CIP 8149 / NCTC 11857 / SLCC 5334 / V8), this protein is Isoleucine--tRNA ligase.